We begin with the raw amino-acid sequence, 480 residues long: UDP-N-acetylmuramate--L-alanine ligase (480 aa).

126 to 132 provides a ligand contact to ATP; that stretch reads GTHGKTT.

This sequence belongs to the MurCDEF family.

It localises to the cytoplasm. It carries out the reaction UDP-N-acetyl-alpha-D-muramate + L-alanine + ATP = UDP-N-acetyl-alpha-D-muramoyl-L-alanine + ADP + phosphate + H(+). The protein operates within cell wall biogenesis; peptidoglycan biosynthesis. Functionally, cell wall formation. The polypeptide is UDP-N-acetylmuramate--L-alanine ligase (Blochmanniella pennsylvanica (strain BPEN)).